The following is a 68-amino-acid chain: Elastase inhibitor AFLEI (68 aa).

The cysteines at positions 5 and 67 are disulfide-linked.

It localises to the secreted. Its function is as follows. Elastase inhibitor. Inhibitor of A.flavus elastase with a Ki of 40 nM. Inhibitor of A.fumigatus elastase and human leukocyte elastase. Inhibits the fibrinogenase and collagenase activities of A.flavus elastase. Does not inhibit porcine pancreatic elastase, trypsin, chymotrypsin, thrombin or A.acutus AC1-proteinase. The sequence is that of Elastase inhibitor AFLEI from Aspergillus flavus.